The following is a 63-amino-acid chain: Overexpressed in colon carcinoma 1 protein homolog (63 aa).

Over residues 1-10 (MGCGNSTATS) the composition is skewed to polar residues. A disordered region spans residues 1 to 39 (MGCGNSTATSAAAGRGPTGAVKDTTEDSITEDDKRRNYG).

The protein belongs to the OCC1 family.

The sequence is that of Overexpressed in colon carcinoma 1 protein homolog from Mus musculus (Mouse).